The sequence spans 3966 residues: Histone-lysine N-methyltransferase 2A (3966 aa).

Disordered stretches follow at residues 1 to 106 (MAHS…LLRV) and 130 to 231 (VFGE…GVKI). Residues 6-25 (RWRFPARPGTTGGGGGGGRR) carry the Menin-binding motif (MBM) motif. Positions 15–29 (TTGGGGGGGRRGLGG) are enriched in gly residues. Over residues 75–102 (GAAAASAASSSSASSSSSSSSSASSGPA) the composition is skewed to low complexity. The short motif at 121–132 (GTNLRRFRAVFG) is the Integrase domain-binding motif 1 (IBM1) element. Residues S134 and S140 each carry the phosphoserine; by CK2 modification. Residues 145-150 (QFLGFG) carry the Integrase domain-binding motif 2 (IBM2) motif. S151 carries the post-translational modification Phosphoserine. Residues 167–178 (KASPRKPRGRPR) constitute a DNA-binding region (a.T hook 1). S195 bears the Phosphoserine mark. Basic and acidic residues predominate over residues 200 to 218 (SETKSADKIKKKDSKSIEK). A DNA-binding region (a.T hook 2) is located at residues 215 to 225 (SIEKKRGRPPT). K237 bears the N6-acetyllysine mark. A DNA-binding region (a.T hook 3) is located at residues 299–307 (RRRGRPPST). The interval 322–343 (LEKPQKVRKDKEGTPPLTKEDK) is disordered. Residue K371 is modified to N6-acetyllysine. A disordered region spans residues 440–590 (RLESTPNSRF…PWLMPPTIPL (151 aa)). A compositionally biased stretch (low complexity) spans 450 to 489 (SATSCGSSEKSSAASQHSSQMSSDSSRSSSPSIDTTSDSQ). Residue S516 is modified to Phosphoserine. The segment covering 544–557 (LPTLQSAPQQQTSS) has biased composition (low complexity). A compositionally biased stretch (pro residues) spans 558–571 (SPPPPLLTPPPPLQ). At K634 the chain carries N6-acetyllysine. A Phosphoserine modification is found at S678. 4 disordered regions span residues 711-943 (ESVT…ADVA), 963-1003 (RGNL…TSSI), 1034-1064 (IEKSKSLKQTDQPKAQGQESDSSETSVRGPR), and 1101-1161 (ILSS…CQVP). Low complexity-rich tracts occupy residues 717–730 (SNRTSSGASSSGVS) and 760–790 (LSTSELSPLTPPSSVSSSLSIPVSPLAASAL). Composition is skewed to polar residues over residues 791–806 (NPTFTFPSHSLTQSGE) and 817–830 (QTSALAEPFSSNSP). At T837 the chain carries Phosphothreonine. A compositionally biased stretch (basic and acidic residues) spans 843 to 887 (EKGRKKDTAPEELSKDRDADKSVEKDKSRERDREREKENKRESRK). S923 is modified (phosphoserine). The span at 989 to 1003 (SAPSSSTVKHSTSSI) shows a compositional bias: low complexity. Residues 1040-1059 (LKQTDQPKAQGQESDSSETS) are compositionally biased toward polar residues. Residue S1053 is modified to Phosphoserine. Over residues 1101 to 1111 (ILSSMGNDDKS) the composition is skewed to basic and acidic residues. At K1127 the chain carries N6-acetyllysine. Residues 1144–1192 (KKGRRSRRCGQCPGCQVPEDCGICTNCLDKPKFGGRNIKKQCCKMRKCQ) form a CXXC-type zinc finger. The Zn(2+) site is built by C1152, C1155, C1158, C1164, C1167, C1170, C1186, and C1191. Positions 1196 to 1390 (WMPSKASLQK…PLSNGISSKQ (195 aa)) are disordered. The segment covering 1217-1229 (SKTTEKKESKEST) has biased composition (basic and acidic residues). The span at 1230 to 1241 (AVKSPLEPAQKA) shows a compositional bias: low complexity. N6-acetyllysine is present on K1232. Over residues 1245–1270 (PREEPAPKKSSSEPPPRKPVEEKSEE) the composition is skewed to basic and acidic residues. Residues 1369-1390 (KQENAGTLNILNPLSNGISSKQ) show a composition bias toward polar residues. 3 consecutive PHD-type zinc fingers follow at residues 1430 to 1481 (RVVC…CKFC), 1478 to 1532 (CKFC…CVRC), and 1565 to 1629 (GNFC…CTER). The interval 1583-1599 (KMMQCGKCDRWVHSKCE) is interaction with histone H3K4me3. The 131-residue stretch at 1637 to 1767 (ALEKELQASL…SFFIRQMERV (131 aa)) folds into the Bromo domain. Disordered regions lie at residues 1665–1714 (YRQA…EGVK) and 1807–1870 (WQER…PGID). Positions 1828–1849 (APKPKGPGEPDSPTPLHPPTPP) are enriched in pro residues. Position 1839 is a phosphoserine (S1839). T1847 bears the Phosphothreonine mark. S1860 is subject to Phosphoserine. The C2HC pre-PHD-type zinc-finger motif lies at 1872–1912 (NRQCALCLMYGDDSANDAGRLLYIGQNEWTHVNCALWSAEV). The PHD-type 4 zinc-finger motif lies at 1933–1980 (LRCEFCQKPGATVGCCLTSCTSNYHFMCSRAKNCVFLDDKKVYCQRHR). The 57-residue stretch at 2020–2076 (NIHMMIGSMTIDCLGILNDLSDCEDKLFPIGYQCSRVYWSTTDARKRCVYTCKIMEC) folds into the FYR N-terminal domain. Position 2100 is a phosphoserine (S2100). The disordered stretch occupies residues 2147 to 2174 (RTPSYSPTQRSPGCRPLPSAGSPTPTTH). Phosphothreonine is present on T2148. Phosphoserine occurs at positions 2152 and 2202. 4 disordered regions span residues 2214–2339 (VRTG…ATPG), 2371–2619 (RGQR…SARA), 2639–2673 (EDIPFYSNSTGKKRGKRSAEGQVDGADDLSTSDED), and 2709–2759 (KISQ…DAGE). The span at 2218–2230 (SAYSRSSVSSVPS) shows a compositional bias: low complexity. Polar residues-rich tracts occupy residues 2250–2284 (LSSSANLGHSAPPSSSSQRTVGGSKTSHLDGSSPS) and 2308–2320 (TSSSKSTDGSAHS). Basic and acidic residues-rich tracts occupy residues 2411–2422 (ILHEHIGSSSRD) and 2430–2440 (SSKETCKEKHS). The segment covering 2498–2509 (GQSTQVEGSSKE) has biased composition (polar residues). A Glycyl lysine isopeptide (Lys-Gly) (interchain with G-Cter in SUMO2) cross-link involves residue K2524. Positions 2528–2537 (ENQSKNTQKE) are enriched in polar residues. S2560 carries the post-translational modification Phosphoserine. Residues 2569 to 2588 (PSPNNTLSQDPQSNNYQNLP) show a composition bias toward polar residues. Residue S2607 is modified to Phosphoserine. A compositionally biased stretch (basic residues) spans 2609–2618 (KRRYPRRSAR). Acidic residues predominate over residues 2663 to 2673 (GADDLSTSDED). The span at 2722–2737 (SDTSVTATSRKSSQIP) shows a compositional bias: polar residues. The segment covering 2740 to 2759 (NGKENGTENLKIDRPEDAGE) has biased composition (basic and acidic residues). S2792 carries the post-translational modification Phosphoserine. Residues 2843–2851 (SDIMDFVLK) carry the 9aaTAD motif. S2951 bears the Phosphoserine mark. N6-acetyllysine is present on K2954. Disordered regions lie at residues 2958 to 3060 (ITEK…NAAV) and 3164 to 3239 (AAQS…PSNI). Residues 3012–3025 (HGNSQDLTRNSGTP) show a composition bias toward polar residues. The residue at position 3032 (S3032) is a Phosphoserine. Residues 3035-3060 (VPVQNQKYVPSSTDSPGPSQISNAAV) show a composition bias toward polar residues. The segment covering 3167-3178 (SSFPPNISSPPS) has biased composition (low complexity). Residues 3196–3212 (EANQRTDLTTTVATPSS) are compositionally biased toward polar residues. Positions 3214 to 3229 (LKKRPISRLHTRKNKK) are enriched in basic residues. At T3369 the chain carries Phosphothreonine. K3459 carries the post-translational modification N6-acetyllysine. The segment at 3462-3640 (TLTSQRDRDP…AMEEEESGFS (179 aa)) is disordered. Polar residues predominate over residues 3475–3487 (PGTQPSNFTQTAE). Residues 3501-3528 (PSAKPASSASPGSSPSSGQQSGSSSVPG) are compositionally biased toward low complexity. Residues S3510 and S3523 each carry the phosphoserine modification. Basic and acidic residues predominate over residues 3558–3570 (TSSEAHIPHRDTD). The 82-residue stretch at 3663–3744 (KKGLVFEISS…KHCRNYKFRF (82 aa)) folds into the FYR C-terminal domain. The WDR5 interaction motif (WIN) signature appears at 3759–3764 (GSARAE). Residues 3782–3805 (HRQPPEYNPNDEEEEEVQLKSARR) form a disordered region. The region spanning 3826–3942 (EAVGVYRSPI…RGEELTYDYK (117 aa)) is the SET domain. S-adenosyl-L-methionine contacts are provided by H3836 and R3838. Residue C3879 is modified to S-methylcysteine; by autocatalysis. S-adenosyl-L-methionine-binding positions include Y3880 and 3903–3904 (NH). C3906 and C3954 together coordinate Zn(2+). The 17-residue stretch at 3950-3966 (NKLPCNCGAKKCRKFLN) folds into the Post-SET domain. N3955 is an S-adenosyl-L-methionine binding site. Zn(2+) is bound by residues C3956 and C3961.

Belongs to the class V-like SAM-binding methyltransferase superfamily. Histone-lysine methyltransferase family. TRX/MLL subfamily. In terms of assembly, MLL cleavage product N320 heterodimerizes with MLL cleavage product C180 (via SET and FYRC domains). Component of some MLL1/MLL complex, at least composed of the core components KMT2A/MLL1, ASH2L, HCFC1/HCF1, HCFC2, WDR5, DPY30 and RBBP5, as well as the facultative components BACC1, CHD8, E2F6, HSP70, INO80C, KANSL1, LAS1L, MAX, MCRS1, MEN1, MGA, KAT8/MOF, PELP1, PHF20, PRP31, RING2, RUVB1/TIP49A, RUVB2/TIP49B, SENP3, TAF1, TAF4, TAF6, TAF7, TAF9 and TEX10. Interacts (via WIN motif) with WDR5; the interaction is direct. Interaction with WDR5 is required for stable interaction with ASH2L and RBBP5, and thereby also for optimal histone methyltransferase activity. Interacts with KAT8/MOF; the interaction is direct. Interacts with SBF1 and PPP1R15A. Interacts with ZNF335. Interacts with CLOCK and BMAL1 in a circadian manner. Interacts with PPIE; this results in decreased histone H3 methyltransferase activity. Interacts with CREBBP. Interacts with the WRAD complex composed of WDR5, RBBP5, ASH2L and DPY30. Interacts (via MBM motif) with MEN1. Interacts (via IBM motifs) with PSIP1 (via IBD domain) with moderate affinity whereas the KMT2A-MEN1 complex interacts with a greater affinity; MEN1 enhances interaction of KMT2A with PSIP1. Phosphorylation increases its affinity for PSIP1. Forms a complex with CREBBP and CREB1. Proteolytic cleavage by TASP1 generates MLL cleavage 3product N320 and MLL cleavage product C180, which reassemble through a non-covalent association. 2 cleavage sites exist, cleavage site 1 (CS1) and cleavage site 2 (CS2), to generate MLL cleavage products N320 and C180. CS2 is the major site. Post-translationally, phosphorylation increases its interaction with PSIP1. In terms of processing, auto-methylated at Cys-3879: auto-methylation is inhibited by the WRAD complex and unmodified histone H3.

The protein localises to the nucleus. It catalyses the reaction L-lysyl(4)-[histone H3] + S-adenosyl-L-methionine = N(6)-methyl-L-lysyl(4)-[histone H3] + S-adenosyl-L-homocysteine + H(+). The enzyme catalyses N(6)-methyl-L-lysyl(4)-[histone H3] + S-adenosyl-L-methionine = N(6),N(6)-dimethyl-L-lysyl(4)-[histone H3] + S-adenosyl-L-homocysteine + H(+). It carries out the reaction L-cysteinyl-[protein] + S-adenosyl-L-methionine = S-methyl-L-cysteinyl-[protein] + S-adenosyl-L-homocysteine + H(+). Histone methyltransferase that plays an essential role in early development and hematopoiesis. Catalytic subunit of the MLL1/MLL complex, a multiprotein complex that mediates both methylation of 'Lys-4' of histone H3 (H3K4me) complex and acetylation of 'Lys-16' of histone H4 (H4K16ac). Catalyzes methyl group transfer from S-adenosyl-L-methionine to the epsilon-amino group of 'Lys-4' of histone H3 (H3K4) via a non-processive mechanism. Part of chromatin remodeling machinery predominantly forms H3K4me1 and H3K4me2 methylation marks at active chromatin sites where transcription and DNA repair take place. Has weak methyltransferase activity by itself, and requires other component of the MLL1/MLL complex to obtain full methyltransferase activity. Has no activity toward histone H3 phosphorylated on 'Thr-3', less activity toward H3 dimethylated on 'Arg-8' or 'Lys-9', while it has higher activity toward H3 acetylated on 'Lys-9'. Binds to unmethylated CpG elements in the promoter of target genes and helps maintain them in the nonmethylated state. Required for transcriptional activation of HOXA9. Promotes PPP1R15A-induced apoptosis. Plays a critical role in the control of circadian gene expression and is essential for the transcriptional activation mediated by the CLOCK-BMAL1 heterodimer. Establishes a permissive chromatin state for circadian transcription by mediating a rhythmic methylation of 'Lys-4' of histone H3 (H3K4me) and this histone modification directs the circadian acetylation at H3K9 and H3K14 allowing the recruitment of CLOCK-BMAL1 to chromatin. Also has auto-methylation activity on Cys-3879 in absence of histone H3 substrate. The protein is Histone-lysine N-methyltransferase 2A (Kmt2a) of Mus musculus (Mouse).